Consider the following 100-residue polypeptide: Nucleoid-associated protein MYPU_0500 (100 aa).

Belongs to the YbaB/EbfC family. In terms of assembly, homodimer.

It is found in the cytoplasm. It localises to the nucleoid. Its function is as follows. Binds to DNA and alters its conformation. May be involved in regulation of gene expression, nucleoid organization and DNA protection. The chain is Nucleoid-associated protein MYPU_0500 from Mycoplasmopsis pulmonis (strain UAB CTIP) (Mycoplasma pulmonis).